A 177-amino-acid chain; its full sequence is 3-hydroxydecanoyl-[acyl-carrier-protein] dehydratase (177 aa).

Histidine 76 is a catalytic residue.

The protein belongs to the thioester dehydratase family. FabA subfamily. In terms of assembly, homodimer.

The protein localises to the cytoplasm. The enzyme catalyses a (3R)-hydroxyacyl-[ACP] = a (2E)-enoyl-[ACP] + H2O. The catalysed reaction is (3R)-hydroxydecanoyl-[ACP] = (2E)-decenoyl-[ACP] + H2O. It carries out the reaction (2E)-decenoyl-[ACP] = (3Z)-decenoyl-[ACP]. It participates in lipid metabolism; fatty acid biosynthesis. Its function is as follows. Necessary for the introduction of cis unsaturation into fatty acids. Catalyzes the dehydration of (3R)-3-hydroxydecanoyl-ACP to E-(2)-decenoyl-ACP and then its isomerization to Z-(3)-decenoyl-ACP. Can catalyze the dehydratase reaction for beta-hydroxyacyl-ACPs with saturated chain lengths up to 16:0, being most active on intermediate chain length. This Haemophilus influenzae (strain PittGG) protein is 3-hydroxydecanoyl-[acyl-carrier-protein] dehydratase.